A 378-amino-acid polypeptide reads, in one-letter code: Protein RecA (378 aa).

79-86 (GPESSGKT) contributes to the ATP binding site.

The protein belongs to the RecA family.

It is found in the cytoplasm. Can catalyze the hydrolysis of ATP in the presence of single-stranded DNA, the ATP-dependent uptake of single-stranded DNA by duplex DNA, and the ATP-dependent hybridization of homologous single-stranded DNAs. It interacts with LexA causing its activation and leading to its autocatalytic cleavage. This Streptococcus pyogenes serotype M2 (strain MGAS10270) protein is Protein RecA.